Reading from the N-terminus, the 649-residue chain is MIKITFPDGAVREFEIGTTTSEIAESISKSLAKKALAGKFNGQLIDTTRAITQDGSIEIVTPDHEDALDILRHSAAHLFAQAARRLFPDIHLGVGPAIQDGFYYDTDNEAGQISNEDLPRIEEEMKKIVKENFPSVREEVTKDEAREIFKNDPYKLELIEEHSEDAGGLTIYRQGEYVDLCRGPHVPSTGRIQVFHLLNVAGAYWRGDSNNAMMQRIYGTAWFDKKDLKSYLKRLEEAKERDHRKLGKELDLFMISQEVGQGLPFWLPDGATIRRIIERYITDKEVASGYQHVYTPPIASVDLYKTSGHWDHYREDMFPTMDMGDGESFVLRPMNCPHHIEVYKNHVHSYRELPIRIAELGMMHRYEKSGALSGLQRVREMTLNDGHTFVALDQVEDEFKRTLQLIIDVYEDFNLTDYSFRLSYRDPNDTHKYFDDDEMWEKSQTMLKAAMDDMGLDYYEAEGEAAFYGPKLDIQVKTALGNDETLSTIQLDFLLPERFELTYIGADGEEHRPVMIHRGIVSTMERFTAYLIETYKGAFPTWLAPHQVTVIPISNEAHIDYAWEVAKELRDHGIRADVDDRNEKMQYKIRQSQTKKVPYQLIVGDKEVENGTVNVRRYGSKQTHTESIAEFRENILADIKRKSRPDNAK.

Residues 1–61 (MIKITFPDGA…TQDGSIEIVT (61 aa)) form the TGS domain. A catalytic region spans residues 242-540 (DHRKLGKELD…LIETYKGAFP (299 aa)). Positions 336, 387, and 517 each coordinate Zn(2+).

Belongs to the class-II aminoacyl-tRNA synthetase family. Homodimer. The cofactor is Zn(2+).

It localises to the cytoplasm. The catalysed reaction is tRNA(Thr) + L-threonine + ATP = L-threonyl-tRNA(Thr) + AMP + diphosphate + H(+). Functionally, catalyzes the attachment of threonine to tRNA(Thr) in a two-step reaction: L-threonine is first activated by ATP to form Thr-AMP and then transferred to the acceptor end of tRNA(Thr). Also edits incorrectly charged L-seryl-tRNA(Thr). This Streptococcus mutans serotype c (strain ATCC 700610 / UA159) protein is Threonine--tRNA ligase.